The primary structure comprises 280 residues: Diaminopimelate epimerase (280 aa).

Positions 13 and 64 each coordinate substrate. C73 functions as the Proton donor in the catalytic mechanism. Substrate contacts are provided by residues 74–75 (GN), N164, N197, and 215–216 (ER). Catalysis depends on C224, which acts as the Proton acceptor. 225 to 226 (GT) lines the substrate pocket.

It belongs to the diaminopimelate epimerase family. In terms of assembly, homodimer.

It is found in the cytoplasm. The catalysed reaction is (2S,6S)-2,6-diaminopimelate = meso-2,6-diaminopimelate. It participates in amino-acid biosynthesis; L-lysine biosynthesis via DAP pathway; DL-2,6-diaminopimelate from LL-2,6-diaminopimelate: step 1/1. In terms of biological role, catalyzes the stereoinversion of LL-2,6-diaminopimelate (L,L-DAP) to meso-diaminopimelate (meso-DAP), a precursor of L-lysine and an essential component of the bacterial peptidoglycan. In Leptospira biflexa serovar Patoc (strain Patoc 1 / Ames), this protein is Diaminopimelate epimerase.